The primary structure comprises 376 residues: Mitogen-activated protein kinase 5 (376 aa).

The Protein kinase domain maps to 43-329 (VPPIRPIGRG…VEEALCYPYL (287 aa)). ATP contacts are provided by residues 49–57 (IGRGAYGFV) and K72. D169 acts as the Proton acceptor in catalysis. T201 carries the phosphothreonine modification. A TXY motif is present at residues 201–203 (TEY). A Phosphotyrosine modification is found at Y203. Phosphothreonine is present on T206.

This sequence belongs to the protein kinase superfamily. CMGC Ser/Thr protein kinase family. MAP kinase subfamily. Post-translationally, autophosphorylated on threonine and tyrosine residues. In terms of processing, dually phosphorylated on Thr-201 and Tyr-203, which activates the enzyme.

The enzyme catalyses L-seryl-[protein] + ATP = O-phospho-L-seryl-[protein] + ADP + H(+). It carries out the reaction L-threonyl-[protein] + ATP = O-phospho-L-threonyl-[protein] + ADP + H(+). Its activity is regulated as follows. Activated by threonine and tyrosine phosphorylation. Activated by the MAP kinase kinase MKK2. Activated by the MAP kinase kinase MKK6 in vitro. In Arabidopsis thaliana (Mouse-ear cress), this protein is Mitogen-activated protein kinase 5 (MPK5).